The primary structure comprises 619 residues: Very-long-chain aldehyde decarbonylase GL1-1 (619 aa).

The next 5 helical transmembrane spans lie at 44-64, 93-113, 123-143, 190-210, and 322-342; these read LLLL…WSSF, DNFL…FPSL, GLAV…YAAH, AAAC…VLGF, and PFLL…WAWS. Positions 129–269 constitute a Fatty acid hydroxylase domain; the sequence is LLHVAATEPL…MPLFDLIGGT (141 aa).

It belongs to the sterol desaturase family. In terms of assembly, homodimer.

It localises to the endoplasmic reticulum membrane. The enzyme catalyses a long-chain fatty aldehyde + 2 NADPH + O2 + H(+) = a long-chain alkane + formate + 2 NADP(+) + H2O. Aldehyde decarbonylase involved in the conversion of aldehydes to alkanes. Core component of a very-long-chain alkane synthesis complex. The protein is Very-long-chain aldehyde decarbonylase GL1-1 of Oryza sativa subsp. indica (Rice).